A 107-amino-acid polypeptide reads, in one-letter code: Ribonuclease P protein component 4 (107 aa).

Zn(2+)-binding residues include C66, C69, C92, and C95.

The protein belongs to the eukaryotic/archaeal RNase P protein component 4 family. Consists of a catalytic RNA component and at least 4-5 protein subunits. Zn(2+) serves as cofactor.

The protein localises to the cytoplasm. It carries out the reaction Endonucleolytic cleavage of RNA, removing 5'-extranucleotides from tRNA precursor.. Its function is as follows. Part of ribonuclease P, a protein complex that generates mature tRNA molecules by cleaving their 5'-ends. In Methanosarcina mazei (strain ATCC BAA-159 / DSM 3647 / Goe1 / Go1 / JCM 11833 / OCM 88) (Methanosarcina frisia), this protein is Ribonuclease P protein component 4.